Here is a 431-residue protein sequence, read N- to C-terminus: D-tagatose-1,6-bisphosphate aldolase subunit KbaZ (431 aa).

It belongs to the GatZ/KbaZ family. KbaZ subfamily. As to quaternary structure, forms a complex with KbaY.

It participates in carbohydrate metabolism; D-tagatose 6-phosphate degradation; D-glyceraldehyde 3-phosphate and glycerone phosphate from D-tagatose 6-phosphate: step 2/2. Functionally, component of the tagatose-1,6-bisphosphate aldolase KbaYZ that is required for full activity and stability of the Y subunit. Could have a chaperone-like function for the proper and stable folding of KbaY. When expressed alone, KbaZ does not show any aldolase activity. The chain is D-tagatose-1,6-bisphosphate aldolase subunit KbaZ from Citrobacter koseri (strain ATCC BAA-895 / CDC 4225-83 / SGSC4696).